The sequence spans 335 residues: MTTILAIETSCDETAAAVIENGDTIRSNVVATQMESHARFGGVVPEIASRHHVEVVTAVVEEALEKAKVTYQDLTAVAVTEGPGLVGALLVGIHAAKAIAFAHGLPLIGVHHIAGHIYANQLVAKLQFPLLALVVSGGHTELIYMEKDGQFQVIGQTRDDAVGEAYDKVARALALPYPGGPNVEQLADTAEATLDLPRSWLEKDSYDFSFSGLKSAVLNRLNNDKQRGIVTDRAALAKGFQESVVDVLVAKTVRAQAQFNVKQVVLAGGVAANKGLRKALTEAFANKDVTLLVPPLSLCTDNAAMIGACAHSMWLRGIAGNMAMNARPGLPLSSF.

2 residues coordinate Fe cation: His112 and His116. Substrate contacts are provided by residues Val134 to Gly138, Asp167, Gly180, and Asn273. Asp301 is a binding site for Fe cation.

Belongs to the KAE1 / TsaD family. Requires Fe(2+) as cofactor.

It localises to the cytoplasm. The enzyme catalyses L-threonylcarbamoyladenylate + adenosine(37) in tRNA = N(6)-L-threonylcarbamoyladenosine(37) in tRNA + AMP + H(+). Its function is as follows. Required for the formation of a threonylcarbamoyl group on adenosine at position 37 (t(6)A37) in tRNAs that read codons beginning with adenine. Is involved in the transfer of the threonylcarbamoyl moiety of threonylcarbamoyl-AMP (TC-AMP) to the N6 group of A37, together with TsaE and TsaB. TsaD likely plays a direct catalytic role in this reaction. The protein is tRNA N6-adenosine threonylcarbamoyltransferase of Shouchella clausii (strain KSM-K16) (Alkalihalobacillus clausii).